Here is a 220-residue protein sequence, read N- to C-terminus: Charged multivesicular body protein 2a (220 aa).

Position 1 is an N-acetylmethionine (Met1). 2 coiled-coil regions span residues 12–52 and 195–220; these read EELL…KMAK and RAAEAAAALADADADLEERLKNLRRD. Residues 208–218 carry the MIT-interacting motif motif; it reads ADLEERLKNLR.

Belongs to the SNF7 family. As to quaternary structure, probable core component of the endosomal sorting required for transport complex III (ESCRT-III). ESCRT-III components are thought to multimerize to form a flat lattice on the perimeter membrane of the endosome.

The protein localises to the late endosome membrane. It localises to the cytoplasm. Its function is as follows. Probable core component of the endosomal sorting required for transport complex III (ESCRT-III) which is involved in multivesicular bodies (MVBs) formation and sorting of endosomal cargo proteins into MVBs. MVBs contain intraluminal vesicles (ILVs) that are generated by invagination and scission from the limiting membrane of the endosome and mostly are delivered to lysosomes enabling degradation of membrane proteins, such as stimulated growth factor receptors, lysosomal enzymes and lipids. The protein is Charged multivesicular body protein 2a (CHMP2A) of Gallus gallus (Chicken).